The sequence spans 412 residues: Glutamyl-tRNA reductase (412 aa).

Residues 52–55 (TCNR), Ser-108, 113–115 (EYE), and Gln-119 contribute to the substrate site. Cys-53 functions as the Nucleophile in the catalytic mechanism. 189–194 (GAGEIG) lines the NADP(+) pocket.

The protein belongs to the glutamyl-tRNA reductase family. As to quaternary structure, homodimer.

It carries out the reaction (S)-4-amino-5-oxopentanoate + tRNA(Glu) + NADP(+) = L-glutamyl-tRNA(Glu) + NADPH + H(+). It functions in the pathway porphyrin-containing compound metabolism; protoporphyrin-IX biosynthesis; 5-aminolevulinate from L-glutamyl-tRNA(Glu): step 1/2. In terms of biological role, catalyzes the NADPH-dependent reduction of glutamyl-tRNA(Glu) to glutamate 1-semialdehyde (GSA). This Sulfurisphaera tokodaii (strain DSM 16993 / JCM 10545 / NBRC 100140 / 7) (Sulfolobus tokodaii) protein is Glutamyl-tRNA reductase.